Here is a 285-residue protein sequence, read N- to C-terminus: Probable endonuclease 4 (285 aa).

9 residues coordinate Zn(2+): histidine 69, histidine 109, glutamate 145, aspartate 179, histidine 182, histidine 216, aspartate 229, histidine 231, and glutamate 261.

This sequence belongs to the AP endonuclease 2 family. Zn(2+) serves as cofactor.

The enzyme catalyses Endonucleolytic cleavage to 5'-phosphooligonucleotide end-products.. Functionally, endonuclease IV plays a role in DNA repair. It cleaves phosphodiester bonds at apurinic or apyrimidinic (AP) sites, generating a 3'-hydroxyl group and a 5'-terminal sugar phosphate. In Shigella sonnei (strain Ss046), this protein is Probable endonuclease 4.